The following is a 145-amino-acid chain: AN1-type zinc finger protein 2A (145 aa).

AN1-type zinc fingers lie at residues 4–52 (PDLG…QKDV) and 94–142 (KIFT…RPTI). Zn(2+)-binding residues include C10, C15, C25, C28, C33, H36, H42, C44, C100, C105, C115, C118, C123, H126, H132, and C134.

The protein resides in the cytoplasm. The protein localises to the nucleus. The sequence is that of AN1-type zinc finger protein 2A (ZFAND2A) from Homo sapiens (Human).